The primary structure comprises 853 residues: DNA mismatch repair protein MutS (853 aa).

Position 613 to 620 (613 to 620 (GPNMGGKS)) interacts with ATP.

This sequence belongs to the DNA mismatch repair MutS family.

This protein is involved in the repair of mismatches in DNA. It is possible that it carries out the mismatch recognition step. This protein has a weak ATPase activity. In Vibrio campbellii (strain ATCC BAA-1116), this protein is DNA mismatch repair protein MutS.